An 877-amino-acid polypeptide reads, in one-letter code: Probable alpha/beta-glucosidase agdC (877 aa).

Residues 1–14 (MLGSLLLLAPLAGA) form the signal peptide. N-linked (GlcNAc...) asparagine glycosylation is found at Asn171, Asn293, and Asn373. The active-site Nucleophile is the Asp422. Glu425 is a catalytic residue. The disordered stretch occupies residues 432–476 (DPCTDPERYSSENNLPPAPPPVRSSSPRPLPGFPADFQPSSASRS). Residues 447-463 (PPAPPPVRSSSPRPLPG) are compositionally biased toward pro residues. N-linked (GlcNAc...) asparagine glycosylation is present at Asn508. Asp573 acts as the Proton donor in catalysis. N-linked (GlcNAc...) asparagine glycans are attached at residues Asn574, Asn610, and Asn744.

Belongs to the glycosyl hydrolase 31 family.

It is found in the secreted. The catalysed reaction is Hydrolysis of terminal, non-reducing (1-&gt;4)-linked alpha-D-glucose residues with release of alpha-D-glucose.. It carries out the reaction Hydrolysis of terminal, non-reducing beta-D-glucosyl residues with release of beta-D-glucose.. Its function is as follows. Glucosidase involved in the degradation of cellulosic biomass. Has both alpha- and beta-glucosidase activity. This Aspergillus oryzae (strain ATCC 42149 / RIB 40) (Yellow koji mold) protein is Probable alpha/beta-glucosidase agdC (agdC).